We begin with the raw amino-acid sequence, 385 residues long: Fe-S cluster assembly protein DRE2 (385 aa).

An N-terminal SAM-like domain region spans residues 1 to 177 (MTSSINILLL…KKLNKNDMTI (177 aa)). Residues 178 to 240 (NVPQEIDNIT…NDLLKYNNHN (63 aa)) are linker. Residues 200 to 226 (YFSSDDENSSDGSLSDNANEEEEDDDE) form a disordered region. The segment covering 217-226 (ANEEEEDDDE) has biased composition (acidic residues). Cys261, Cys275, Cys278, and Cys280 together coordinate [2Fe-2S] cluster. Positions 261–280 (CELSLNGGKKRKKACKDCTC) are fe-S binding site A. [4Fe-4S] cluster contacts are provided by Cys348, Cys351, Cys359, and Cys362. 2 short sequence motifs (cx2C motif) span residues 348-351 (CGSC) and 359-362 (CDGC). The interval 348–362 (CGSCALGDAFRCDGC) is fe-S binding site B.

Belongs to the anamorsin family. As to quaternary structure, monomer. Interacts with TAH18. Interacts with MIA40. [2Fe-2S] cluster serves as cofactor. Requires [4Fe-4S] cluster as cofactor.

It localises to the cytoplasm. It is found in the mitochondrion intermembrane space. Its function is as follows. Component of the cytosolic iron-sulfur (Fe-S) protein assembly (CIA) machinery required for the maturation of extramitochondrial Fe-S proteins. Part of an electron transfer chain functioning in an early step of cytosolic Fe-S biogenesis, facilitating the de novo assembly of a [4Fe-4S] cluster on the scaffold complex CFD1-NBP35. Electrons are transferred to DRE2 from NADPH via the FAD- and FMN-containing protein TAH18. TAH18-DRE2 are also required for the assembly of the diferric tyrosyl radical cofactor of ribonucleotide reductase (RNR), probably by providing electrons for reduction during radical cofactor maturation in the catalytic small subunit RNR2. The sequence is that of Fe-S cluster assembly protein DRE2 from Candida dubliniensis (strain CD36 / ATCC MYA-646 / CBS 7987 / NCPF 3949 / NRRL Y-17841) (Yeast).